Here is a 626-residue protein sequence, read N- to C-terminus: Phosphomethylpyrimidine synthase (626 aa).

The segment at 1-22 (MTKQEKAINLSESAQVDQQSVQ) is disordered. The segment covering 10–22 (LSESAQVDQQSVQ) has biased composition (polar residues). Residues Asn-232, Met-261, Tyr-290, His-326, 346–348 (SRG), 387–390 (DGLR), and Glu-426 each bind substrate. His-430 lines the Zn(2+) pocket. Residue Tyr-453 participates in substrate binding. Residue His-494 participates in Zn(2+) binding. Cys-574, Cys-577, and Cys-582 together coordinate [4Fe-4S] cluster.

Belongs to the ThiC family. Homodimer. [4Fe-4S] cluster serves as cofactor.

The enzyme catalyses 5-amino-1-(5-phospho-beta-D-ribosyl)imidazole + S-adenosyl-L-methionine = 4-amino-2-methyl-5-(phosphooxymethyl)pyrimidine + CO + 5'-deoxyadenosine + formate + L-methionine + 3 H(+). The protein operates within cofactor biosynthesis; thiamine diphosphate biosynthesis. Catalyzes the synthesis of the hydroxymethylpyrimidine phosphate (HMP-P) moiety of thiamine from aminoimidazole ribotide (AIR) in a radical S-adenosyl-L-methionine (SAM)-dependent reaction. This Pseudomonas putida (strain ATCC 47054 / DSM 6125 / CFBP 8728 / NCIMB 11950 / KT2440) protein is Phosphomethylpyrimidine synthase.